The following is a 62-amino-acid chain: Regulator of rDNA transcription protein 15 (62 aa).

Belongs to the ART2/RRT15 family.

Its function is as follows. Involved in modulation of rDNA transcription. In Saccharomyces cerevisiae (strain ATCC 204508 / S288c) (Baker's yeast), this protein is Regulator of rDNA transcription protein 15 (RRT15).